The following is a 513-amino-acid chain: Xylose import ATP-binding protein XylG (513 aa).

2 ABC transporter domains span residues Leu-5–Glu-242 and Leu-259–Glu-505. Gly-37 to Ser-44 contributes to the ATP binding site.

It belongs to the ABC transporter superfamily. Xylose importer (TC 3.A.1.2.4) family. The complex is composed of two ATP-binding proteins (XylG), two transmembrane proteins (XylH) and a solute-binding protein (XylF).

The protein resides in the cell inner membrane. The enzyme catalyses D-xylose(out) + ATP + H2O = D-xylose(in) + ADP + phosphate + H(+). Its function is as follows. Part of the ABC transporter complex XylFGH involved in xylose import. Responsible for energy coupling to the transport system. This Pectobacterium atrosepticum (strain SCRI 1043 / ATCC BAA-672) (Erwinia carotovora subsp. atroseptica) protein is Xylose import ATP-binding protein XylG.